The following is a 232-amino-acid chain: Large ribosomal subunit protein uL1 (232 aa).

This sequence belongs to the universal ribosomal protein uL1 family. Part of the 50S ribosomal subunit.

Functionally, binds directly to 23S rRNA. The L1 stalk is quite mobile in the ribosome, and is involved in E site tRNA release. Its function is as follows. Protein L1 is also a translational repressor protein, it controls the translation of the L11 operon by binding to its mRNA. The sequence is that of Large ribosomal subunit protein uL1 from Liberibacter asiaticus (Citrus greening disease).